A 311-amino-acid polypeptide reads, in one-letter code: tRNA dimethylallyltransferase (311 aa).

Position 10-17 (10-17 (GPTASGKT)) interacts with ATP. 12-17 (TASGKT) lines the substrate pocket. 3 interaction with substrate tRNA regions span residues 35 to 38 (DSAL), 159 to 163 (QRINR), and 240 to 245 (RCVGYR).

Belongs to the IPP transferase family. In terms of assembly, monomer. Mg(2+) is required as a cofactor.

It carries out the reaction adenosine(37) in tRNA + dimethylallyl diphosphate = N(6)-dimethylallyladenosine(37) in tRNA + diphosphate. Its function is as follows. Catalyzes the transfer of a dimethylallyl group onto the adenine at position 37 in tRNAs that read codons beginning with uridine, leading to the formation of N6-(dimethylallyl)adenosine (i(6)A). This is tRNA dimethylallyltransferase from Haemophilus influenzae (strain 86-028NP).